Consider the following 1022-residue polypeptide: Protein translocase subunit SECA1, chloroplastic (1022 aa).

A chloroplast-targeting transit peptide spans 1–72; that stretch reads MVSPLCDSQL…SRKRSTSVNA (72 aa). Ser73 is subject to N-acetylserine. An ATP-binding site is contributed by 176-183; sequence MRTGEGKT. Positions 985–1022 are disordered; that stretch reads KDEEKKSQNGKPSKQVDNASEKPKQVGVTDEPSSIASA. The segment covering 993–1002 has biased composition (polar residues); the sequence is NGKPSKQVDN.

This sequence belongs to the SecA family. Part of the Sec protein translocation apparatus. Interacts probably with SCY1. As to expression, expressed in green tissues, including cotyledons, rosette and cauline leaves, and sepals. Also detected at the base and the tip of the trichome.

It localises to the plastid. It is found in the chloroplast stroma. The protein resides in the chloroplast thylakoid membrane. The catalysed reaction is ATP + H2O + chloroplast-proteinSide 1 = ADP + phosphate + chloroplast-proteinSide 2.. Has a central role in coupling the hydrolysis of ATP to the transfer of proteins across the thylakoid membrane. Involved in photosynthetic acclimation and required for chloroplast biogenesis. The sequence is that of Protein translocase subunit SECA1, chloroplastic from Arabidopsis thaliana (Mouse-ear cress).